The chain runs to 22 residues: Large ribosomal subunit protein bL32 (22 aa).

Residues 1-22 form a disordered region; that stretch reads CVQQNKKSRSARDMXXSXDALE. Residues 13-22 are compositionally biased toward low complexity; sequence DMXXSXDALE.

The protein belongs to the bacterial ribosomal protein bL32 family.

This is Large ribosomal subunit protein bL32 (rpmF) from Ectopseudomonas mendocina (Pseudomonas mendocina).